A 152-amino-acid chain; its full sequence is Small ribosomal subunit protein uS15 (152 aa).

Residues 1–11 (MARMHARRRGK) are compositionally biased toward basic residues. Residues 1–25 (MARMHARRRGKSSSVRPARNEAPAW) form a disordered region.

This sequence belongs to the universal ribosomal protein uS15 family. In terms of assembly, part of the 30S ribosomal subunit.

The chain is Small ribosomal subunit protein uS15 from Methanoregula boonei (strain DSM 21154 / JCM 14090 / 6A8).